The primary structure comprises 653 residues: DUF21 domain-containing protein At1g55930, chloroplastic (653 aa).

The N-terminal 72 residues, 1–72 (MELDLSVLGR…DFSHRCQFVV (72 aa)), are a transit peptide targeting the chloroplast. Transmembrane regions (helical) follow at residues 103-123 (GIVLGAVVCGVLFYGCGKVLA), 157-177 (GLILAVLLGLSAFFSMAETSI), 208-228 (FLTTILIGTTVVNIAATALVT), 234-254 (IFGEAGVSAATGVMTVAILLL), and 280-300 (WLSLILYPVGRVVTYLSMGIL). The CNNM transmembrane domain maps to 149-335 (VLKVLREQGL…ELSGAIEEEE (187 aa)). CBS domains are found at residues 354–415 (MTPL…LLES) and 421–479 (MAHK…IFDE).

It localises to the plastid. It is found in the chloroplast membrane. This chain is DUF21 domain-containing protein At1g55930, chloroplastic (CBSDUFCH2), found in Arabidopsis thaliana (Mouse-ear cress).